Consider the following 709-residue polypeptide: DNA ligase (709 aa).

The tract at residues 1 to 20 is disordered; the sequence is MTATHRGAQADASAPAGPLP. Residues 52 to 56, 101 to 102, and E146 contribute to the NAD(+) site; these read DAEYD and SL. The N6-AMP-lysine intermediate role is filled by K148. NAD(+) contacts are provided by R169, E205, K322, and K346. The Zn(2+) site is built by C440, C443, C458, and C464. Residues 623-709 form the BRCT domain; sequence KAPAPLSGKT…AEAGAAPAQE (87 aa).

Belongs to the NAD-dependent DNA ligase family. LigA subfamily. The cofactor is Mg(2+). Mn(2+) is required as a cofactor.

The enzyme catalyses NAD(+) + (deoxyribonucleotide)n-3'-hydroxyl + 5'-phospho-(deoxyribonucleotide)m = (deoxyribonucleotide)n+m + AMP + beta-nicotinamide D-nucleotide.. Functionally, DNA ligase that catalyzes the formation of phosphodiester linkages between 5'-phosphoryl and 3'-hydroxyl groups in double-stranded DNA using NAD as a coenzyme and as the energy source for the reaction. It is essential for DNA replication and repair of damaged DNA. This is DNA ligase from Cupriavidus necator (strain ATCC 17699 / DSM 428 / KCTC 22496 / NCIMB 10442 / H16 / Stanier 337) (Ralstonia eutropha).